We begin with the raw amino-acid sequence, 466 residues long: Cytochrome P450 85A1 (466 aa).

The chain crosses the membrane as a helical span at residues 1–21 (MVLAVLIGVLVGIVLVSSLLL). Residue Cys416 participates in heme binding.

Belongs to the cytochrome P450 family. Heme is required as a cofactor.

It is found in the membrane. It carries out the reaction 6-deoxoteasterone + reduced [NADPH--hemoprotein reductase] + O2 = 6alpha-hydroxyteasterone + oxidized [NADPH--hemoprotein reductase] + H2O + H(+). It catalyses the reaction 6alpha-hydroxytyphasterol + reduced [NADPH--hemoprotein reductase] + O2 = teasterone + oxidized [NADPH--hemoprotein reductase] + 2 H2O + H(+). The catalysed reaction is 3-dehydro-6-deoxoteasterone + reduced [NADPH--hemoprotein reductase] + O2 = 3-dehydro-6alpha-hydroxyteasterone + oxidized [NADPH--hemoprotein reductase] + H2O + H(+). The enzyme catalyses 3-dehydro-6alpha-hydroxyteasterone + reduced [NADPH--hemoprotein reductase] + O2 = 3-dehydroteasterone + oxidized [NADPH--hemoprotein reductase] + 2 H2O + H(+). It carries out the reaction 6-deoxotyphasterol + reduced [NADPH--hemoprotein reductase] + O2 = 6alpha-hydroxytyphasterol + oxidized [NADPH--hemoprotein reductase] + H2O + H(+). It catalyses the reaction 6alpha-hydroxytyphasterol + reduced [NADPH--hemoprotein reductase] + O2 = typhasterol + oxidized [NADPH--hemoprotein reductase] + 2 H2O + H(+). The catalysed reaction is 6-deoxocastasterone + reduced [NADPH--hemoprotein reductase] + O2 = 6alpha-hydroxycastasterone + oxidized [NADPH--hemoprotein reductase] + H2O + H(+). The enzyme catalyses 6alpha-hydroxycastasterone + reduced [NADPH--hemoprotein reductase] + O2 = castasterone + oxidized [NADPH--hemoprotein reductase] + 2 H2O + H(+). It carries out the reaction 3-dehydro-6-deoxoteasterone + 2 reduced [NADPH--hemoprotein reductase] + 2 O2 = 3-dehydroteasterone + 2 oxidized [NADPH--hemoprotein reductase] + 3 H2O + 2 H(+). It catalyses the reaction 6-deoxocastasterone + 2 reduced [NADPH--hemoprotein reductase] + 2 O2 = castasterone + 2 oxidized [NADPH--hemoprotein reductase] + 3 H2O + 2 H(+). The catalysed reaction is 6-deoxoteasterone + 2 reduced [NADPH--hemoprotein reductase] + 2 O2 = teasterone + 2 oxidized [NADPH--hemoprotein reductase] + 3 H2O + 2 H(+). The enzyme catalyses 6-deoxotyphasterol + 2 reduced [NADPH--hemoprotein reductase] + 2 O2 = typhasterol + 2 oxidized [NADPH--hemoprotein reductase] + 3 H2O + 2 H(+). Its pathway is plant hormone biosynthesis; brassinosteroid biosynthesis. Functionally, involved in reduction steps of the biosynthesis of plant campesterol-derivative steroids, ending to castasterone (CS) but missing brassinolide (BL). Catalyzes the C6-oxidation step in brassinosteroids biosynthesis; the conversion of 6-deoxoteasterone (6-deoxoTE) to teasterone (TE), 3-dehydro-6-deoxoteasterone (6-deoxo3DT, 6-deoxo-3-DHT) to 3-dehydroteasterone (3DT, 3-DHT), 6-deoxotyphasterol (6-deoxoTY) to typhasterol (TY) and of 6-deoxocastasterone (6-deoxoCS) to castasterone (CS). The sequence is that of Cytochrome P450 85A1 from Brachypodium distachyon (Purple false brome).